The primary structure comprises 827 residues: Zinc phosphodiesterase ELAC protein 2 (827 aa).

Residues 1–16 constitute a mitochondrion transit peptide; it reads MWALRSLLRPLGLRTM. Disordered stretches follow at residues 15 to 46 and 181 to 220; these read TMSQ…GWGP and SERR…QCLP. The segment covering 181-192 has biased composition (basic and acidic residues); it reads SERRCGEQEPSR. Phosphoserine is present on residues Ser193, Ser197, Ser202, Ser207, Ser617, and Ser735. Residues 199-210 show a composition bias toward polar residues; it reads NRLSPKQSSSDP. Residues 794-827 form a disordered region; sequence LTQQADSSEDREPHQKRAHSEEPHSPQSKKVRAQ. Thr795 carries the phosphothreonine modification. Residue Ser800 is modified to Phosphoserine. Over residues 801 to 817 the composition is skewed to basic and acidic residues; sequence SEDREPHQKRAHSEEPH. At Ser818 the chain carries Phosphoserine.

This sequence belongs to the RNase Z family. Homodimer. Interacts with PTCD1. Zn(2+) is required as a cofactor.

The protein resides in the mitochondrion. It localises to the mitochondrion matrix. It is found in the mitochondrion nucleoid. Its subcellular location is the nucleus. The enzyme catalyses Endonucleolytic cleavage of RNA, removing extra 3' nucleotides from tRNA precursor, generating 3' termini of tRNAs. A 3'-hydroxy group is left at the tRNA terminus and a 5'-phosphoryl group is left at the trailer molecule.. Zinc phosphodiesterase, which displays mitochondrial tRNA 3'-processing endonuclease activity. Involved in tRNA maturation, by removing a 3'-trailer from precursor tRNA. Associates with mitochondrial DNA complexes at the nucleoids to initiate RNA processing and ribosome assembly. The protein is Zinc phosphodiesterase ELAC protein 2 (Elac2) of Rattus norvegicus (Rat).